Reading from the N-terminus, the 35-residue chain is Coatomer subunit alpha (35 aa).

Oligomeric complex that consists of at least the alpha, beta, beta', gamma, delta, epsilon and zeta subunits. Interacts with SCYL1. Interacts with JAGN1. Interacts with TMEM41B. Interacts with SVEP1. Probably interacts with PEX11A. As to expression, gastric, duodenal and jejunal mucosa. Circulates in the blood. Seems to be confined to specific endocrine cells.

Functionally, xenin stimulates exocrine pancreatic secretion. It inhibits pentagastrin-stimulated secretion of acid, to induce exocrine pancreatic secretion and to affect small and large intestinal motility. In the gut, xenin interacts with the neurotensin receptor. This Canis lupus familiaris (Dog) protein is Coatomer subunit alpha (COPA).